The following is a 63-amino-acid chain: Conotoxin Lt11.1 (63 aa).

The N-terminal stretch at 1–23 is a signal peptide; that stretch reads MMFRLTSVLLVIVLLNLVVLTNA. 4 disulfides stabilise this stretch: Cys-24–Cys-34, Cys-28–Cys-39, Cys-33–Cys-42, and Cys-38–Cys-47. A propeptide spanning residues 53-63 is cleaved from the precursor; sequence ALLQRLLGHQR.

Belongs to the conotoxin I2 superfamily. Expressed by the venom duct.

Its subcellular location is the secreted. In Conus litteratus (Lettered cone), this protein is Conotoxin Lt11.1.